Reading from the N-terminus, the 184-residue chain is MSIEKESTNNFVQERLDSLYEIDCKIVSLLDNMSSLFQTYSTPKSSDNDLTEQKDQMKAQTKNIYNAISNVAIGLRKEVKIMDENIGVYNKNKDGIMILPISVDQKNTTLGTKKLNDEIKELNTIVTGEETDGAMNDTNMEATTKQETNINNEDSEKEKQENITAIETKKESSENEDEDFDMIA.

Polar residues predominate over residues 142–152; the sequence is ATTKQETNINN. The interval 142–184 is disordered; sequence ATTKQETNINNEDSEKEKQENITAIETKKESSENEDEDFDMIA. Over residues 154–173 the composition is skewed to basic and acidic residues; the sequence is DSEKEKQENITAIETKKESS. Positions 174-184 are enriched in acidic residues; sequence ENEDEDFDMIA.

Belongs to the Mediator complex subunit 11 family. Component of the Mediator complex.

It localises to the nucleus. In terms of biological role, component of the Mediator complex, a coactivator involved in the regulated transcription of nearly all RNA polymerase II-dependent genes. Mediator functions as a bridge to convey information from gene-specific regulatory proteins to the basal RNA polymerase II transcription machinery. Mediator is recruited to promoters by direct interactions with regulatory proteins and serves as a scaffold for the assembly of a functional pre-initiation complex with RNA polymerase II and the general transcription factors. This Debaryomyces hansenii (strain ATCC 36239 / CBS 767 / BCRC 21394 / JCM 1990 / NBRC 0083 / IGC 2968) (Yeast) protein is Mediator of RNA polymerase II transcription subunit 11 (MED11).